The chain runs to 143 residues: Competence protein ComGD (143 aa).

Positions 1–10 (MNIKLNEEKG) are excised as a propeptide. Phenylalanine 11 carries the N-methylphenylalanine modification. Residues 11-31 (FTLLESLLVLSLASILLVAVF) traverse the membrane as a helical segment.

As to quaternary structure, the transformation pili are flexible filaments, consisting mainly of the major pilin ComGC and smaller amounts of the minor pilins, including at least ComGD, ComGF and ComGG. Interacts with ComGF. Interacts with ComGG. Post-translationally, processing of ComGD in competent cells requires ComC.

The protein localises to the cell membrane. It is found in the cell surface. Its function is as follows. Required for formation of the type IV-like pilus (T4P) that plays a role in transformation. Transformation pili are dynamically extended and retracted, perhaps thereby promoting DNA uptake and transformation. Required for transformation and DNA binding. The protein is Competence protein ComGD (comGD) of Bacillus subtilis (strain 168).